We begin with the raw amino-acid sequence, 236 residues long: Glyoxalase 3 (236 aa).

Residues Cys-136, His-137, and Glu-168 contribute to the active site. Cys-136 carries the cysteine sulfinic acid (-SO2H) modification.

The protein belongs to the peptidase C56 family. HSP31-like subfamily. As to quaternary structure, monomer.

It catalyses the reaction methylglyoxal + H2O = (R)-lactate + H(+). Its function is as follows. Catalyzes the conversion of methylglyoxal (MG) to D-lactate in a single glutathione (GSH)-independent step. Selective for MG, does not use glyoxal as substrate. Plays a role in detoxifying endogenously produced MG, particularly when glycerol is the principal carbon source. Important for viability in stationary phase. The polypeptide is Glyoxalase 3 (Candida albicans (strain SC5314 / ATCC MYA-2876) (Yeast)).